The following is a 564-amino-acid chain: Type 2 DNA topoisomerase 6 subunit B (564 aa).

Residues Asn46, Asp78, 99 to 100 (TK), 109 to 116 (GQQGIGIS), and Lys471 contribute to the ATP site.

It belongs to the TOP6B family. Homodimer. Heterotetramer of two Top6A and two Top6B chains.

The enzyme catalyses ATP-dependent breakage, passage and rejoining of double-stranded DNA.. Its function is as follows. Relaxes both positive and negative superturns and exhibits a strong decatenase activity. In Pyrococcus horikoshii (strain ATCC 700860 / DSM 12428 / JCM 9974 / NBRC 100139 / OT-3), this protein is Type 2 DNA topoisomerase 6 subunit B.